Reading from the N-terminus, the 910-residue chain is MEAKVEEKEPEPVENAGPDAPVRLTPMMEQYIEIKAANVDSLLFYRMGDFYELFFDDAVAASAALGITLTKRGKHLGEDIPMCGVPVHAADDYLQKLIAKGYRVAVCEQVEDPAEAKKRGSKSVVKRDVIRLVTPGTLTEEKLLDPAQANFLMAMGRTRGDGALALAWIDISTGTFRVAETTPDRLFADIMRVDPRELVVADSAFHDEELRPVFDLIGKAVTPQPATLFDSAAAQTRIQHYFNVATLDGFGQFSRPELSAISGAIAYIEKTQISERPPLMRPEREHEGGTLFIDPATRASLELARTMSGNRDGSLLKAIDRTVTGGGARLLAERLTAPLTSPKEIALRLDSVSWCLSEQTLCEALRLELKGVPDMPRALSRLAVGRGGPRDLGALACGFEAAGGIASLLDGALLPDELAAARESIEKMPAGFAAHLDRALADELPLLKRDGGFVREGYNSELDEMRALRDQSRRVIAGLQADYIEETGIKSLKIKHNNVLGYFIEVTANNSGAMTDTDEAKSRFIHRQTMANAMRFTTTELAELESKIANAADRALSIELAIFEELTAEAVAHADSIRAAASALSVFDVSTALAVLAEEQGYCRPHVDDSLSFNIVAGRHPVVEQALRRQAANPFVANDCDLSPQRDGGDGAIWLLTGPNMGGKSTFLRQNALIAILAQMGSFVPAGSAHIGVVDRLFSRVGASDDLARGRSTFMVEMVETAAILNQAGEHSLVILDEIGRGTATFDGLSIAWAAVEYLHEKNRCRALFATHFHEMTALSEKLERLSNVTMRVKEWDNDVIFLHEVAKGAADRSYGVQVARLAGLPEAVVNRARDVLHQLEAGETSGKADRLIDDLPLFSVMLQQEKPKPQIQAKDSELANAVAAISPDELTPREALDLIYKLKELAGKA.

The segment covering 1 to 11 has biased composition (basic and acidic residues); sequence MEAKVEEKEPE. Positions 1-21 are disordered; it reads MEAKVEEKEPEPVENAGPDAP. 658–665 provides a ligand contact to ATP; that stretch reads GPNMGGKS.

This sequence belongs to the DNA mismatch repair MutS family.

Functionally, this protein is involved in the repair of mismatches in DNA. It is possible that it carries out the mismatch recognition step. This protein has a weak ATPase activity. The sequence is that of DNA mismatch repair protein MutS from Brucella suis (strain ATCC 23445 / NCTC 10510).